The following is a 192-amino-acid chain: Probable nicotinate-nucleotide adenylyltransferase (192 aa).

The protein belongs to the NadD family.

The catalysed reaction is nicotinate beta-D-ribonucleotide + ATP + H(+) = deamido-NAD(+) + diphosphate. It participates in cofactor biosynthesis; NAD(+) biosynthesis; deamido-NAD(+) from nicotinate D-ribonucleotide: step 1/1. Functionally, catalyzes the reversible adenylation of nicotinate mononucleotide (NaMN) to nicotinic acid adenine dinucleotide (NaAD). The sequence is that of Probable nicotinate-nucleotide adenylyltransferase from Bradyrhizobium sp. (strain BTAi1 / ATCC BAA-1182).